The primary structure comprises 344 residues: Proline-rich transmembrane protein 2 (344 aa).

Disordered regions lie at residues 1–220 and 233–265; these read MAAS…GAPP and GRAHGGHPGSPRGSLSRHPSSQLAGPGVEGGEG. The Cytoplasmic portion of the chain corresponds to 1 to 272; the sequence is MAASSSEVSE…GEGTQKPRDY (272 aa). Ser28 is subject to Phosphoserine. Over residues 69–82 the composition is skewed to low complexity; sequence PETTETPVETPETV. Thr74 and Thr78 each carry phosphothreonine. A compositionally biased stretch (polar residues) spans 124-143; the sequence is AEQQSAAPPEPTSEQALQLN. Positions 151–162 are enriched in pro residues; the sequence is TSQPPPKPPLQA. A compositionally biased stretch (polar residues) spans 168–178; that stretch reads ENPTTEVLTES. The span at 201-211 shows a compositional bias: pro residues; sequence APQPHSPPSTK. Ser242 is modified (phosphoserine). Arg244 carries the omega-N-methylarginine modification. Phosphoserine occurs at positions 252 and 253. Residues 273 to 293 constitute an intramembrane region (helical); it reads IILAILSCFCPMWPVNIVAFA. Residues 294–321 are Cytoplasmic-facing; the sequence is YAVMSRNSLQQGDVDGAQRLGRVAKLLS. The helical transmembrane segment at 322-342 threads the bilayer; the sequence is IVALVGGVLIIIASCVINLGV. Residues 343-344 lie on the Extracellular side of the membrane; it reads YK.

This sequence belongs to the CD225/Dispanin family. In terms of assembly, component of the outer core of AMPAR complex. AMPAR complex consists of an inner core made of 4 pore-forming GluA/GRIA proteins (GRIA1, GRIA2, GRIA3 and GRIA4) and 4 major auxiliary subunits arranged in a twofold symmetry. One of the two pairs of distinct binding sites is occupied either by CNIH2, CNIH3 or CACNG2, CACNG3. The other harbors CACNG2, CACNG3, CACNG4, CACNG8 or GSG1L. This inner core of AMPAR complex is complemented by outer core constituents binding directly to the GluA/GRIA proteins at sites distinct from the interaction sites of the inner core constituents. Outer core constituents include at least PRRT1, PRRT2, CKAMP44/SHISA9, FRRS1L and NRN1. The proteins of the inner and outer core serve as a platform for other, more peripherally associated AMPAR constituents. Alone or in combination, these auxiliary subunits control the gating and pharmacology of the AMPAR complex and profoundly impact their biogenesis and protein processing. Interacts with intersectin 1/ITSN1. Interacts with SNARE complex components, including SNAP25, STX1A, SYT1 and SYT2; this interaction may inhibit SNARE complex formation. Neuron-specific expression throughout the brain, including hippocampus (at protein level).

The protein localises to the cell membrane. The protein resides in the presynaptic cell membrane. Its subcellular location is the synapse. It is found in the cell projection. It localises to the axon. The protein localises to the cytoplasmic vesicle. The protein resides in the secretory vesicle. Its subcellular location is the synaptic vesicle membrane. It is found in the postsynaptic density membrane. It localises to the dendritic spine. Its function is as follows. As a component of the outer core of AMPAR complex, may be involved in synaptic transmission in the central nervous system. In hippocampal neurons, in presynaptic terminals, plays an important role in the final steps of neurotransmitter release, possibly by regulating Ca(2+)-sensing. In the cerebellum, may inhibit SNARE complex formation and down-regulate short-term facilitation. The sequence is that of Proline-rich transmembrane protein 2 (Prrt2) from Rattus norvegicus (Rat).